The following is a 346-amino-acid chain: [LysW]-lysine/[LysW]-ornithine hydrolase (346 aa).

A Zn(2+)-binding site is contributed by His-67. Residue Asp-69 is part of the active site. Asp-91 provides a ligand contact to Zn(2+). The active-site Proton acceptor is the Glu-121. Zn(2+) contacts are provided by Glu-122, Glu-145, and His-316.

The protein belongs to the peptidase M20A family. LysK subfamily. Requires Zn(2+) as cofactor. Co(2+) serves as cofactor.

It localises to the cytoplasm. The catalysed reaction is [amino-group carrier protein]-C-terminal-gamma-(L-lysyl)-L-glutamate + H2O = [amino-group carrier protein]-C-terminal-L-glutamate + L-lysine. It catalyses the reaction [amino-group carrier protein]-C-terminal-gamma-(L-ornithyl)-L-glutamate + H2O = [amino-group carrier protein]-C-terminal-L-glutamate + L-ornithine. It participates in amino-acid biosynthesis; L-lysine biosynthesis via AAA pathway; L-lysine from L-alpha-aminoadipate (Thermus route): step 5/5. Its pathway is amino-acid biosynthesis; L-arginine biosynthesis. Catalyzes the release of L-lysine from [LysW]-gamma-L-lysine and the release of L-ornithine from [LysW]-L-ornithine. In Sulfurisphaera tokodaii (strain DSM 16993 / JCM 10545 / NBRC 100140 / 7) (Sulfolobus tokodaii), this protein is [LysW]-lysine/[LysW]-ornithine hydrolase.